The following is a 295-amino-acid chain: 33 kDa chaperonin (295 aa).

2 disulfide bridges follow: C237/C239 and C270/C273.

The protein belongs to the HSP33 family. In terms of processing, under oxidizing conditions two disulfide bonds are formed involving the reactive cysteines. Under reducing conditions zinc is bound to the reactive cysteines and the protein is inactive.

The protein localises to the cytoplasm. Functionally, redox regulated molecular chaperone. Protects both thermally unfolding and oxidatively damaged proteins from irreversible aggregation. Plays an important role in the bacterial defense system toward oxidative stress. This Geobacillus sp. (strain WCH70) protein is 33 kDa chaperonin.